The following is a 177-amino-acid chain: Putative pre-16S rRNA nuclease (177 aa).

This sequence belongs to the YqgF nuclease family.

The protein resides in the cytoplasm. Functionally, could be a nuclease involved in processing of the 5'-end of pre-16S rRNA. This is Putative pre-16S rRNA nuclease from Psychrobacter arcticus (strain DSM 17307 / VKM B-2377 / 273-4).